A 21-amino-acid polypeptide reads, in one-letter code: Hydroxypicolinic acid-activating enzyme (21 aa).

Functionally, involved in etamycin biosynthesis. The sequence is that of Hydroxypicolinic acid-activating enzyme from Streptomyces griseoviridis.